The primary structure comprises 93 residues: Integration host factor subunit beta (93 aa).

The protein belongs to the bacterial histone-like protein family. As to quaternary structure, heterodimer of an alpha and a beta chain.

In terms of biological role, this protein is one of the two subunits of integration host factor, a specific DNA-binding protein that functions in genetic recombination as well as in transcriptional and translational control. In Tolumonas auensis (strain DSM 9187 / NBRC 110442 / TA 4), this protein is Integration host factor subunit beta.